We begin with the raw amino-acid sequence, 60 residues long: Temporin-CG1 (60 aa).

Positions 1–22 are cleaved as a signal peptide; the sequence is MFTLKKSLLLLFFLATINLSLC. A propeptide spans 23–43 (removed in mature form); the sequence is EQERNAEEERRDDDERNAEVE.

As to expression, expressed by the skin glands.

The protein localises to the secreted. In terms of biological role, antimicrobial peptide active against a variety of Gram-positive and some Gram-negative bacterial strains. Has antifungal activity against a slime mold isolate. Has weak hemolytic activity against human erythrocytes. The sequence is that of Temporin-CG1 from Amolops chunganensis (Chungan torrent frog).